Reading from the N-terminus, the 558-residue chain is Glucose-6-phosphate isomerase (558 aa).

Residue alanine 2 is modified to N-acetylalanine. An N6-acetyllysine modification is found at lysine 12. The residue at position 34 (lysine 34) is an N6-(2-hydroxyisobutyryl)lysine. Position 107 is a phosphoserine (serine 107). Residue threonine 109 is modified to Phosphothreonine. Lysine 142 carries the post-translational modification N6-acetyllysine. 159–160 (GS) serves as a coordination point for D-glucose 6-phosphate. Serine 185 is subject to Phosphoserine; by CK2. D-glucose 6-phosphate is bound at residue 210-215 (SKTFTT). Phosphothreonine is present on threonine 250. D-glucose 6-phosphate-binding residues include glutamine 354, glutamate 358, and histidine 389. Glutamate 358 functions as the Proton donor in the catalytic mechanism. Histidine 389 is an active-site residue. Lysine 454 is modified (N6-acetyllysine; alternate). N6-malonyllysine; alternate is present on lysine 454. Lysine 454 bears the N6-succinyllysine; alternate mark. Serine 455 bears the Phosphoserine mark. Lysine 519 contributes to the D-glucose 6-phosphate binding site. Lysine 519 is a catalytic residue.

This sequence belongs to the GPI family. In terms of assembly, homodimer; in the catalytically active form. Monomer in the secreted form. Phosphorylation at Ser-185 by CK2 has been shown to decrease enzymatic activity and may contribute to secretion by a non-classical secretory pathway. In terms of processing, ISGylated.

The protein resides in the cytoplasm. It is found in the secreted. It carries out the reaction alpha-D-glucose 6-phosphate = beta-D-fructose 6-phosphate. Its pathway is carbohydrate degradation; glycolysis; D-glyceraldehyde 3-phosphate and glycerone phosphate from D-glucose: step 2/4. Its activity is regulated as follows. Strongly inhibited by erythrose 4-phosphate. Functionally, in the cytoplasm, catalyzes the conversion of glucose-6-phosphate to fructose-6-phosphate, the second step in glycolysis, and the reverse reaction during gluconeogenesis. Besides it's role as a glycolytic enzyme, also acts as a secreted cytokine: acts as an angiogenic factor (AMF) that stimulates endothelial cell motility. Acts as a neurotrophic factor, neuroleukin, for spinal and sensory neurons. It is secreted by lectin-stimulated T-cells and induces immunoglobulin secretion. The chain is Glucose-6-phosphate isomerase from Homo sapiens (Human).